We begin with the raw amino-acid sequence, 148 residues long: Large ribosomal subunit protein bL9 (148 aa).

The protein belongs to the bacterial ribosomal protein bL9 family.

Its function is as follows. Binds to the 23S rRNA. This is Large ribosomal subunit protein bL9 from Pelotomaculum thermopropionicum (strain DSM 13744 / JCM 10971 / SI).